Reading from the N-terminus, the 504-residue chain is Kinesin light chain 3 (504 aa).

Residues 90 to 150 (ALSAHVGALE…EEEKRHLEFL (61 aa)) adopt a coiled-coil conformation. Residues 153 to 197 (LRQYDPPAESQQSESPPRRDSLASLFPSEEEERKGPEAAGAAAAQ) are disordered. Positions 158 to 167 (PPAESQQSES) are enriched in low complexity. Position 173 is a phosphoserine (Ser173). TPR repeat units lie at residues 207-240 (LRTL…LERS), 249-282 (ATML…REQT), 291-324 (AATL…REKV), 333-366 (AKQL…YEAL), and 375-408 (AKTK…EDLP). The segment at 411 to 438 (LGAPNTGTAGDAEQALRRSSSLSKIRES) is disordered. At Ser466 the chain carries Phosphoserine. Thr498 carries the phosphothreonine modification. Ser502 carries the phosphoserine modification.

Belongs to the kinesin light chain family. In terms of assembly, oligomer composed of two heavy chains and two light chains. Associates with microtubulin in an ATP-dependent manner. Interacts with KIF5C. Interacts with ODF1. Interacts with LRGUK. Interacts with VDAC2.

It localises to the cytoplasm. The protein resides in the cytoskeleton. It is found in the mitochondrion. Its function is as follows. Kinesin is a microtubule-associated force-producing protein that may play a role in organelle transport. Plays a role during spermiogenesis in the development of the sperm tail midpiece and in the normal function of spermatozoa. May play a role in the formation of the mitochondrial sheath formation in the developing spermatid midpiece. The polypeptide is Kinesin light chain 3 (KLC3) (Pongo abelii (Sumatran orangutan)).